Consider the following 323-residue polypeptide: Methenyltetrahydromethanopterin cyclohydrolase (323 aa).

Belongs to the MCH family.

It is found in the cytoplasm. It catalyses the reaction 5,10-methenyl-5,6,7,8-tetrahydromethanopterin + H2O = N(5)-formyl-5,6,7,8-tetrahydromethanopterin + H(+). It participates in one-carbon metabolism; methanogenesis from CO(2); 5,10-methenyl-5,6,7,8-tetrahydromethanopterin from CO(2): step 3/3. Its function is as follows. Catalyzes the reversible interconversion of 5-formyl-H(4)MPT to methenyl-H(4)MPT(+). The chain is Methenyltetrahydromethanopterin cyclohydrolase (mch) from Methanocaldococcus jannaschii (strain ATCC 43067 / DSM 2661 / JAL-1 / JCM 10045 / NBRC 100440) (Methanococcus jannaschii).